The primary structure comprises 518 residues: Reduced folate transporter (518 aa).

M1 carries the N-acetylmethionine modification. Over 1–29 (MVPTGQVAEKQACEEPRQDRELKSWRCLV) the chain is Cytoplasmic. The chain crosses the membrane as a helical span at residues 30–50 (FYLCFFGFMAQLRPGESFITP). Folate contacts are provided by I48 and T49. Residues 51 to 62 (YLLQQNFTIEQV) are Extracellular-facing. N-linked (GlcNAc...) asparagine glycosylation is present at N56. A helical transmembrane segment spans residues 63 to 85 (TNEIIPVLPYSHLAVLVPIFLLT). The Cytoplasmic portion of the chain corresponds to 86 to 89 (DYLR). Residues 90 to 110 (YKPILILQCLSFMCVWLLLLL) form a helical membrane-spanning segment. The Extracellular portion of the chain corresponds to 111 to 114 (GTSV). The helical transmembrane segment at 115 to 137 (VHMQLMEVFYSVTMAARIAYSSY) threads the bilayer. Residues E121 and R131 each coordinate folate. Over 138-151 (IFSLVRPSRYQRMA) the chain is Cytoplasmic. A helical membrane pass occupies residues 152–176 (SYSRAAVLLGVFTSSVLGQVLWPLE). Position 162 (V162) interacts with folate. Topologically, residues 177 to 181 (QKSQN) are extracellular. The chain crosses the membrane as a helical span at residues 182 to 200 (SNMLNYISLGFIIFSLGLS). At 201–266 (LFLKRPKHSL…LSELVGNLRQ (66 aa)) the chain is on the cytoplasmic side. A helical transmembrane segment spans residues 267-292 (PQLRLWCLWWVFNSAGYYLIVYYVHV). A281, G282, and I286 together coordinate folate. Over 293–300 (LWSIDKNL) the chain is Extracellular. The helical transmembrane segment at 301-323 (NYNGAVDAASTLLSAITSFSAGF) threads the bilayer. Residues 324-329 (VKIRWA) are Cytoplasmic-facing. The helical transmembrane segment at 330 to 350 (LWSKLVIASVIAIQAGLVFCM) threads the bilayer. Over 351–353 (YMV) the chain is Extracellular. A helical transmembrane segment spans residues 354-377 (HYVTWVHKIWVLYMTYVLFRGAYQ). Folate is bound by residues Y366 and V370. The Cytoplasmic segment spans residues 378-391 (FLVPIATFQIASSL). A helical membrane pass occupies residues 392–415 (SKELCALVFGINTFLATALKTAIT). Residues 407 to 419 (ATALKTAITLVVS) are required for substrate-binding. Topologically, residues 416–423 (LVVSDKRG) are extracellular. Residues 424–448 (LGLKVEKQFCIYSVYFMVLSVICFV) traverse the membrane as a helical segment. Over 449–512 (GAVLDGVRYC…DGVEDSEASL (64 aa)) the chain is Cytoplasmic. A phosphoserine mark is found at S473, S478, and S483. A disordered region spans residues 480 to 518 (QVPSMQDGGLGGLQPSAPQLLPEDGVEDSEASLRAEAKA).

The protein belongs to the reduced folate carrier (RFC) transporter (TC 2.A.48) family.

The protein resides in the cell membrane. It localises to the apical cell membrane. The protein localises to the basolateral cell membrane. It catalyses the reaction 5-amino-1-(5-phospho-beta-D-ribosyl)imidazole-4-carboxamide(in) + (6S)-5-methyl-5,6,7,8-tetrahydrofolate(out) = 5-amino-1-(5-phospho-beta-D-ribosyl)imidazole-4-carboxamide(out) + (6S)-5-methyl-5,6,7,8-tetrahydrofolate(in). Its function is as follows. Antiporter that mediates the import of reduced folates, driven by the export of organic anions. Also acts as an importer of immunoreactive cyclic dinucleotides, but with a lower transporter activity. Mechanistically, acts as a secondary active transporter, which exports intracellular organic anions down their concentration gradients to facilitate the uptake of its substrates. Has high affinity for N5-methyltetrahydrofolate, the predominant circulating form of folate. Also mediates the import of antifolate drug methotrexate. 5-amino-4-imidazolecarboxamide riboside (AICAR), when phosphorylated to AICAR monophosphate, can serve as an organic anion for antiporter activity. The sequence is that of Reduced folate transporter from Cricetulus griseus (Chinese hamster).